Reading from the N-terminus, the 417-residue chain is Hydrogen cyanide synthase subunit HcnC (417 aa).

Residues 1 to 18 (MIKHYDVVIAGGGVIGAS) form the signal peptide. Residue 7–21 (VVIAGGGVIGASCAY) participates in FAD binding. Residue Cys19 is the site of N-palmitoyl cysteine attachment. Residue Cys19 is the site of S-diacylglycerol cysteine attachment. The chain crosses the membrane as a helical span at residues 46 to 66 (SAGGLWAIGESVGLGCGVIFF).

Belongs to the FAD-dependent glycerol-3-phosphate dehydrogenase family. Heterotrimer of HcnA, HcnB and HcnC.

It is found in the cell membrane. The enzyme catalyses glycine + 2 A = hydrogen cyanide + 2 AH2 + CO2. A three-component membrane-bound flavoenzyme that catalyzes the formation of hydrogen cyanide, a secondary metabolite, by transfer of electrons to a cyanide-resistant branch of the aerobic respiratory chain. Contributes to suppression of black root rot of tobacco. This Pseudomonas protegens (strain DSM 19095 / LMG 27888 / CFBP 6595 / CHA0) protein is Hydrogen cyanide synthase subunit HcnC.